Here is a 401-residue protein sequence, read N- to C-terminus: Dual-specificity RNA methyltransferase RlmN (401 aa).

Residue Glu114 is the Proton acceptor of the active site. The 246-residue stretch at Asp120–Asp365 folds into the Radical SAM core domain. Cysteines 127 and 370 form a disulfide. [4Fe-4S] cluster contacts are provided by Cys134, Cys138, and Cys141. Residues Gly187 to Glu188, Ser219, Ser241 to His243, and Asn327 each bind S-adenosyl-L-methionine. The S-methylcysteine intermediate role is filled by Cys370.

Belongs to the radical SAM superfamily. RlmN family. The cofactor is [4Fe-4S] cluster.

Its subcellular location is the cytoplasm. The enzyme catalyses adenosine(2503) in 23S rRNA + 2 reduced [2Fe-2S]-[ferredoxin] + 2 S-adenosyl-L-methionine = 2-methyladenosine(2503) in 23S rRNA + 5'-deoxyadenosine + L-methionine + 2 oxidized [2Fe-2S]-[ferredoxin] + S-adenosyl-L-homocysteine. The catalysed reaction is adenosine(37) in tRNA + 2 reduced [2Fe-2S]-[ferredoxin] + 2 S-adenosyl-L-methionine = 2-methyladenosine(37) in tRNA + 5'-deoxyadenosine + L-methionine + 2 oxidized [2Fe-2S]-[ferredoxin] + S-adenosyl-L-homocysteine. In terms of biological role, specifically methylates position 2 of adenine 2503 in 23S rRNA and position 2 of adenine 37 in tRNAs. m2A2503 modification seems to play a crucial role in the proofreading step occurring at the peptidyl transferase center and thus would serve to optimize ribosomal fidelity. This is Dual-specificity RNA methyltransferase RlmN from Stenotrophomonas maltophilia (strain K279a).